Reading from the N-terminus, the 467-residue chain is Pancreatic lipase-related protein 3 (467 aa).

An N-terminal signal peptide occupies residues 1–17; it reads MLGIWIVAFLFFGTSRG. A disulfide bridge connects residues cysteine 21 and cysteine 27. Asparagine 74 carries N-linked (GlcNAc...) asparagine glycosylation. A disulfide bridge links cysteine 107 with cysteine 118. Asparagine 125 is a glycosylation site (N-linked (GlcNAc...) asparagine). Serine 168 acts as the Nucleophile in catalysis. The active-site Charge relay system is the aspartate 191. The cysteines at positions 252 and 277 are disulfide-linked. Histidine 279 serves as the catalytic Charge relay system. Disulfide bonds link cysteine 301–cysteine 312, cysteine 315–cysteine 320, and cysteine 451–cysteine 467. In terms of domain architecture, PLAT spans 355–467; sequence WRHKLSVKLS…PNILQNLKPC (113 aa).

This sequence belongs to the AB hydrolase superfamily. Lipase family. As to expression, overexpressed in hepatocellular carcinoma.

It localises to the secreted. The catalysed reaction is a triacylglycerol + H2O = a diacylglycerol + a fatty acid + H(+). The protein is Pancreatic lipase-related protein 3 (PNLIPRP3) of Homo sapiens (Human).